We begin with the raw amino-acid sequence, 96 residues long: Prokineticin Bm8-e (96 aa).

Residues 1-19 form the signal peptide; that stretch reads MKCFAQIVVLLLVIAFSHG. 5 cysteine pairs are disulfide-bonded: C26-C38, C32-C50, C37-C78, C60-C86, and C80-C95.

It belongs to the AVIT (prokineticin) family. As to expression, expressed by the skin glands.

The protein localises to the secreted. In terms of biological role, potent agonist for both PKR1/PROKR1 and PKR2/PROKR2, and inducer of a potent and long-lasting hyperalgesia. Also potentiates capsaicin-induced TRPV1 current, when tested on DRG neurons. At subnanomolar concentrations, this protein both induces potent chemotaxis of macrophages and stimulates LPS-induced production of the pro-inflammatory cytokines IL-1 and IL-12. In vivo, potently stimulates the contraction of the guinea-pig gastrointestinal (GI) smooth muscle (nanomolar concentration). The polypeptide is Prokineticin Bm8-e (Bombina maxima (Giant fire-bellied toad)).